A 335-amino-acid chain; its full sequence is MATSISLTRYLVEQQRAGGLIPAQLRLLLEVVARACKSISHAVSKGALGDVLGTAGSENVQGEVQKKLDIIANGVLIEANEWGGHLAAMASEEMDGIYLVPHRYPQGEYLLLFDPLDGSSNIDVNVSIGTIFSVLRKPDGERRVEETDFLQPGTRQVAAGYCIYGPQTMLALTVGAGVALFTLDREQGSFVLTQENLRIPEETREFAINMSNMRHWAAPVKRYIDECLQGRSGPRGKDFNMRWVASMVADMHRILSRGGVFLYPWDRREPHKPGKLRLLYEANPMGWLVEQAGGAASNGRQRILEIQPTHLHERVSVILGSKNEVERVALYHGAR.

Mg(2+) contacts are provided by Glu-92, Asp-114, Leu-116, and Asp-117. Substrate is bound by residues 117-120 (DGSS), Asn-209, and Lys-275. Glu-281 contributes to the Mg(2+) binding site.

This sequence belongs to the FBPase class 1 family. Homotetramer. It depends on Mg(2+) as a cofactor.

It localises to the cytoplasm. The catalysed reaction is beta-D-fructose 1,6-bisphosphate + H2O = beta-D-fructose 6-phosphate + phosphate. It participates in carbohydrate biosynthesis; gluconeogenesis. The protein is Fructose-1,6-bisphosphatase class 1 of Verminephrobacter eiseniae (strain EF01-2).